A 298-amino-acid polypeptide reads, in one-letter code: Ribosomal RNA small subunit methyltransferase H (298 aa).

Residues 31 to 33 (GGH), aspartate 50, tyrosine 80, aspartate 95, and glutamine 102 contribute to the S-adenosyl-L-methionine site. The disordered stretch occupies residues 255–298 (AEKDLYGNTNKPFKSVGKAIDPDDEEKERNNRARSARLRIAERE).

The protein belongs to the methyltransferase superfamily. RsmH family.

It localises to the cytoplasm. The catalysed reaction is cytidine(1402) in 16S rRNA + S-adenosyl-L-methionine = N(4)-methylcytidine(1402) in 16S rRNA + S-adenosyl-L-homocysteine + H(+). In terms of biological role, specifically methylates the N4 position of cytidine in position 1402 (C1402) of 16S rRNA. This is Ribosomal RNA small subunit methyltransferase H from Cytophaga hutchinsonii (strain ATCC 33406 / DSM 1761 / CIP 103989 / NBRC 15051 / NCIMB 9469 / D465).